The chain runs to 385 residues: 8-amino-7-oxononanoate synthase (385 aa).

A substrate-binding site is contributed by arginine 21. 108–109 (GF) contacts pyridoxal 5'-phosphate. Residue histidine 133 coordinates substrate. Serine 179, histidine 207, and threonine 233 together coordinate pyridoxal 5'-phosphate. Lysine 236 is subject to N6-(pyridoxal phosphate)lysine. Threonine 352 serves as a coordination point for substrate.

It belongs to the class-II pyridoxal-phosphate-dependent aminotransferase family. BioF subfamily. Homodimer. Pyridoxal 5'-phosphate serves as cofactor.

It carries out the reaction 6-carboxyhexanoyl-[ACP] + L-alanine + H(+) = (8S)-8-amino-7-oxononanoate + holo-[ACP] + CO2. Its pathway is cofactor biosynthesis; biotin biosynthesis. Catalyzes the decarboxylative condensation of pimeloyl-[acyl-carrier protein] and L-alanine to produce 8-amino-7-oxononanoate (AON), [acyl-carrier protein], and carbon dioxide. This is 8-amino-7-oxononanoate synthase from Salmonella arizonae (strain ATCC BAA-731 / CDC346-86 / RSK2980).